The sequence spans 66 residues: Beta-defensin 134 (66 aa).

Positions 1 to 19 are cleaved as a signal peptide; sequence MKPLLVVFVFLFLWDPVLA. Disulfide bonds link cysteine 32–cysteine 58, cysteine 38–cysteine 52, and cysteine 42–cysteine 59.

This sequence belongs to the beta-defensin family.

Its subcellular location is the secreted. Has antibacterial activity. In Homo sapiens (Human), this protein is Beta-defensin 134 (DEFB134).